Here is a 119-residue protein sequence, read N- to C-terminus: NADH-quinone oxidoreductase subunit A (119 aa).

3 helical membrane-spanning segments follow: residues 7-27 (FPVLIFIIFGVVLGIALMSIG), 63-83 (LIAILFILFDLETAFLFPWGV), and 88-108 (IGWPGFIAMGVFLLEFIVGFV).

Belongs to the complex I subunit 3 family. NDH-1 is composed of 14 different subunits. Subunits NuoA, H, J, K, L, M, N constitute the membrane sector of the complex.

The protein localises to the cell inner membrane. The catalysed reaction is a quinone + NADH + 5 H(+)(in) = a quinol + NAD(+) + 4 H(+)(out). Functionally, NDH-1 shuttles electrons from NADH, via FMN and iron-sulfur (Fe-S) centers, to quinones in the respiratory chain. The immediate electron acceptor for the enzyme in this species is believed to be ubiquinone. Couples the redox reaction to proton translocation (for every two electrons transferred, four hydrogen ions are translocated across the cytoplasmic membrane), and thus conserves the redox energy in a proton gradient. The chain is NADH-quinone oxidoreductase subunit A from Cupriavidus pinatubonensis (strain JMP 134 / LMG 1197) (Cupriavidus necator (strain JMP 134)).